A 1112-amino-acid polypeptide reads, in one-letter code: MARPLRAPLRRSFSDHIRDSTARALDVIWKNTRDRRLAEIEAKEACDWLRAAGFPQYAQLYEDLLFPIDISSVKREHDFLDRDAIEALCRRLNTLNKCAVMKLEISPHRKRSEDSDEDEPCAISGKWTFQRDSKRWSRLEEFDVFSPKQDPIPGSPDAVHLKSAPSHENMQTDLSDRQEVASVHSTGSLTTHAPQRGEAAPARTNSVLSVCSSGTFVGNDDSFCSLPSPKELSSFSFSMKGHEKAAKSKTHSLLKRMESLKLKGSHHSKHKAPSKLGLIISGPILQEGVDEEKLKQLNCVEISALNGNHINVPMVRKRSISSSTQTSSSSSQSETSSNVSTPSPVTRTRSLSACNKRGGMYLEGFDPFNQSTFNNVMEQNCKNRESYPEDTVFYIPEDHKPGTFPKALSNGSFSPSGNNSSVNWRTGSFHGPGHISLRRENSSPKELKRRNSSSSVSSRLSIYDNVPGSILYSSSGDLADLENEDIFPELDDILYHVKGMQRIVNQWSEKFSDEGDSDSALDSVSPCPSSPKQIHLDVDNDRATPSDLDSTGNSLNEPEEPSDIPERRDSGVGASLTRSNRHRLRWHSFQSSHRPSLNSVSLQINCQSVAQMNLLQKYSLLKLTALLEKYTPSNKHGFSWAVPKFMKRIKVPDYKDRNVFGVPLTVNVQRTGQPLPQSIQQAMRYLRNHCLDQVGLFRKSGVKSRIQALRQMNESTIDCVNYEGQSAYDVADMLKQYFRDLPEPLMTNKLSETFLQIYQYVPKDQRLQAIKAAIMLLPDENREVLQTLLYFLSDVTAAVKENQMTPTNLAVCLAPSLFHLNTLKRENSSPRVMQRKQSLGKPDQKDLNENLAATQGLAHMIAECKKLFQVPEEMSRCRNSYTEQELKPLTLEALGRLCNDDSADYQHFLQDCVDSLFKEVKEKFKGWVSYSTSEQAELSYKKVSEGPPLRLWRATIEVPATPEEILKRLLKEQHLWDVDLLDSKVIEILDSQTEIYQYVQNSMAPHPARDYVVLRTWRTNLPKGACALLLTSVDHDRAPVVGVRVNVLLARYLIEPCGSGKSKLTYMCRADLRGHMPEWYTKSFGHLCAAEVVKIRDSFSHQNTETKDTKSR.

Residues 37–104 (LAEIEAKEAC…LNKCAVMKLE (68 aa)) enclose the SAM domain. Phosphoserine is present on residues serine 112, serine 115, and serine 155. Disordered stretches follow at residues 146–203 (SPKQ…APAR), 318–350 (RSIS…RTRS), 405–459 (PKAL…VSSR), and 512–574 (SDEG…GVGA). Polar residues predominate over residues 183-193 (VHSTGSLTTHA). The tract at residues 296–468 (QLNCVEISAL…RLSIYDNVPG (173 aa)) is focal adhesion-targeting (FAT). Composition is skewed to low complexity over residues 320 to 348 (ISSS…VTRT) and 409 to 423 (SNGS…SSVN). Serine 343 bears the Phosphoserine mark. Residues 437 to 446 (LRRENSSPKE) show a composition bias toward basic and acidic residues. A compositionally biased stretch (polar residues) spans 520-532 (ALDSVSPCPSSPK). Residues 534–544 (IHLDVDNDRAT) show a composition bias toward basic and acidic residues. Residues 547–556 (DLDSTGNSLN) show a composition bias toward polar residues. The interval 635 to 657 (KHGFSWAVPKFMKRIKVPDYKDR) is polybasic cluster (PBR). The Rho-GAP domain occupies 662–868 (VPLTVNVQRT…HMIAECKKLF (207 aa)). The START domain maps to 898–1105 (CNDDSADYQH…RDSFSHQNTE (208 aa)).

Interacts with EF1A1, facilitates EF1A1 distribution to the membrane periphery and ruffles upon growth factor stimulation and suppresses cell migration. Interacts with tensin TNS1 (via N-terminus); the interaction is decreased by phosphorylation of TNS1. Interacts with TNS3 and PTEN; in resting cells, interacts with TNS3 (via C2 tensin-type domain) but, following growth factor stimulation, TNS3 and PTEN are phosphorylated which leads to weakened interaction with TNS3 and enhanced interaction with PTEN. Interacts (via C-terminus) with tensin TNS4 (via SH2 domain); the interaction is independent of tyrosine phosphorylation of DLC1.

The protein resides in the cytoplasm. Its subcellular location is the cell junction. It localises to the focal adhesion. The protein localises to the membrane. Its function is as follows. Functions as a GTPase-activating protein for the small GTPases RHOA, RHOB, RHOC and CDC42, terminating their downstream signaling. This induces morphological changes and detachment through cytoskeletal reorganization, playing a critical role in biological processes such as cell migration and proliferation. Also functions in vivo as an activator of the phospholipase PLCD1. Active DLC1 increases cell migration velocity but reduces directionality. Required for growth factor-induced epithelial cell migration; in resting cells, interacts with TNS3 while PTEN interacts with the p85 regulatory subunit of the PI3K kinase complex but growth factor stimulation induces phosphorylation of TNS3 and PTEN, causing them to change their binding preference so that PTEN interacts with DLC1 and TNS3 interacts with p85. The PTEN-DLC1 complex translocates to the posterior of migrating cells to activate RHOA while the TNS3-p85 complex translocates to the leading edge of migrating cells to promote RAC1 activation. The protein is Rho GTPase-activating protein 7 (DLC1) of Bos taurus (Bovine).